The chain runs to 279 residues: Energy-coupling factor transporter ATP-binding protein EcfA1 (279 aa).

The 236-residue stretch at 5 to 240 (ITVNNLFFKY…GNRLISLGLD (236 aa)) folds into the ABC transporter domain. 40–47 (GHNGSGKS) provides a ligand contact to ATP.

Belongs to the ABC transporter superfamily. Energy-coupling factor EcfA family. In terms of assembly, forms a stable energy-coupling factor (ECF) transporter complex composed of 2 membrane-embedded substrate-binding proteins (S component), 2 ATP-binding proteins (A component) and 2 transmembrane proteins (T component).

The protein localises to the cell membrane. In terms of biological role, ATP-binding (A) component of a common energy-coupling factor (ECF) ABC-transporter complex. Unlike classic ABC transporters this ECF transporter provides the energy necessary to transport a number of different substrates. The sequence is that of Energy-coupling factor transporter ATP-binding protein EcfA1 from Streptococcus agalactiae serotype Ia (strain ATCC 27591 / A909 / CDC SS700).